The primary structure comprises 323 residues: Homocysteine S-methyltransferase 1 (323 aa).

In terms of domain architecture, Hcy-binding spans Val3 to Leu317. Cys235, Cys302, and Cys303 together coordinate Zn(2+).

In terms of assembly, monomer. It depends on Zn(2+) as a cofactor.

It catalyses the reaction S-methyl-L-methionine + L-homocysteine = 2 L-methionine + H(+). Functionally, catalyzes methyl transfer from S-methylmethionine (SMM) to adenosyl-L-homocysteine (AdoMet). SMM degradation (by HMT-1, HMT-2, HMT-3 and HMT-4) and biosynthesis (by MMT1) constitute the SMM cycle in plants, which is probably required to achieve short term control of AdoMet level. In Zea mays (Maize), this protein is Homocysteine S-methyltransferase 1 (HMT-1).